The sequence spans 372 residues: Alginate lyase (372 aa).

The signal sequence occupies residues 1 to 22 (MKTRLALPCLLGSLLLSSAVHA). Substrate-binding positions include 61–62 (SK), 134–135 (HT), and tyrosine 252.

It belongs to the polysaccharide lyase 5 family.

Its subcellular location is the periplasm. The catalysed reaction is Eliminative cleavage of alginate to give oligosaccharides with 4-deoxy-alpha-L-erythro-hex-4-enuronosyl groups at their non-reducing ends and beta-D-mannuronate at their reducing end.. Its activity is regulated as follows. Monovalent cations such as potassium and sodium enhance activity, as well as a combined action of these cations with magnesium. However, other cations like calcium, cobalt, manganese and zinc, or the presence of EDTA, do not affect the enzymatic activity. Functionally, catalyzes the depolymerization of alginate by cleaving the beta-1,4 glycosidic bond between two adjacent sugar residues via a beta-elimination mechanism. Degrades deacetylated polymannuronate alginate more efficiently than non-deacetylated polyM. Is able to degrade its own alginate, but at a lower efficiency than that produced from M.pyriferia and P.aeruginosa. May serve to degrade mislocalized alginate that is trapped in the periplasmic space. This Azotobacter chroococcum mcd 1 protein is Alginate lyase.